The chain runs to 215 residues: Vesicle-trafficking protein SEC22b (215 aa).

Topologically, residues 1 to 194 are cytoplasmic; it reads MVLLTMIARV…KYLNMRSTYA (194 aa). The Longin domain maps to 6–119; it reads MIARVADGLP…YSFIEFDTFI (114 aa). The residue at position 38 (Lys-38) is an N6-acetyllysine. The region spanning 134–194 is the v-SNARE coiled-coil homology domain; that stretch reads NLGSINTELQ…KYLNMRSTYA (61 aa). Position 137 is a phosphoserine (Ser-137). At Thr-140 the chain carries Phosphothreonine. Ser-164, Ser-168, Ser-174, and Ser-177 each carry phosphoserine. A helical; Anchor for type IV membrane protein transmembrane segment spans residues 195 to 215; sequence KLAAVAVFFIMLIVYVRFWWL.

It belongs to the synaptobrevin family. Interacts with STX17. Component of two distinct SNARE complexes consisting of STX5, GOSR2/BOS1, BET1 and SEC22B or STX18, USE1L, BNIP1/SEC20L and SEC22B. YKT6 can probably replace SEC22B as subunit of either complex. Interacts with the COPII Sec23/24 complex composed of SEC23A and SEC24A; recruits SEC22B into COPII-coated vesicles to allow its transport from the endoplasmic reticulum to the Golgi. Interacts with BET1.

The protein resides in the endoplasmic reticulum membrane. It localises to the endoplasmic reticulum-Golgi intermediate compartment membrane. Its subcellular location is the golgi apparatus. The protein localises to the cis-Golgi network membrane. It is found in the trans-Golgi network membrane. The protein resides in the melanosome. SNARE involved in targeting and fusion of ER-derived transport vesicles with the Golgi complex as well as Golgi-derived retrograde transport vesicles with the ER. This Cricetulus griseus (Chinese hamster) protein is Vesicle-trafficking protein SEC22b (Sec22b).